Here is a 1132-residue protein sequence, read N- to C-terminus: MPRAPRCRAVRSLLRSHYREVLPLATFVRRLGPQGWRLVQRGDPAAFRALVAQCLVCVPWDARPPPAAPSFRQVSCLKELVARVLQRLCERGAKNVLAFGFALLDGARGGPPEAFTTSVRSYLPNTVTDALRGSGAWGLLLRRVGDDVLVHLLARCALFVLVAPSCAYQVCGPPLYQLGAATQARPPPHASGPRRRLGCERAWNHSVREAGVPLGLPAPGARRRGGSASRSLPLPKRPRRGAAPEPERTPVGQGSWAHPGRTRGPSDRGFCVVSPARPAEEATSLEGALSGTRHSHPSVGRQHHAGPPSTSRPPRPWDTPCPPVYAETKHFLYSSGDKEQLRPSFLLSSLRPSLTGARRLVETIFLGSRPWMPGTPRRLPRLPQRYWQMRPLFLELLGNHAQCPYGVLLKTHCPLRAAVTPAAGVCAREKPQGSVAAPEEEDTDPRRLVQLLRQHSSPWQVYGFVRACLRRLVPPGLWGSRHNERRFLRNTKKFISLGKHAKLSLQELTWKMSVRDCAWLRRSPGVGCVPAAEHRLREEILAKFLHWLMSVYVVELLRSFFYVTETTFQKNRLFFYRKSVWSKLQSIGIRQHLKRVQLRELSEAEVRQHREARPALLTSRLRFIPKPDGLRPIVNMDYVVGARTFRREKRAERLTSRVKALFSVLNYERARRPGLLGASVLGLDDIHRAWRTFVLRVRAQDPPPELYFVKVDVTGAYDTIPQDRLTEVIASIIKPQNTYCVRRYAVVQKAAHGHVRKAFKSHVSTLTDLQPYMRQFVAHLQETSPLRDAVVIEQSSSLNEASSGLFDVFLRFMCHHAVRIRGKSYVQCQGIPQGSILSTLLCSLCYGDMENKLFAGIRRDGLLLRLVDDFLLVTPHLTHAKTFLRTLVRGVPEYGCVVNLRKTVVNFPVEDEALGGTAFVQMPAHGLFPWCGLLLDTRTLEVQSDYSSYARTSIRASLTFNRGFKAGRNMRRKLFGVLRLKCHSLFLDLQVNSLQTVCTNIYKILLLQAYRFHACVLQLPFHQQVWKNPTFFLRVISDTASLCYSILKAKNAGMSLGAKGAAGPLPSEAVQWLCHQAFLLKLTRHRVTYVPLLGSLRTAQTQLSRKLPGTTLTALEAAANPALPSDFKTILD.

The tract at residues 1 to 230 is RNA-interacting domain 1; the sequence is MPRAPRCRAV…ARRRGGSASR (230 aa). A GQ motif region spans residues 58-197; that stretch reads VPWDARPPPA…PHASGPRRRL (140 aa). The segment at 137–141 is required for regulating specificity for telomeric DNA and for processivity for primer elongation; the sequence is WGLLL. A disordered region spans residues 210–320; the sequence is AGVPLGLPAP…SRPPRPWDTP (111 aa). The span at 213-234 shows a compositional bias: low complexity; that stretch reads PLGLPAPGARRRGGSASRSLPL. A Bipartite nuclear localization signal motif is present at residues 222-240; it reads RRRGGSASRSLPLPKRPRR. At Ser-227 the chain carries Phosphoserine; by PKB/AKT1. The segment at 231-324 is linker; that stretch reads SLPLPKRPRR…RPWDTPCPPV (94 aa). Over residues 293-304 the composition is skewed to basic residues; it reads RHSHPSVGRQHH. Residues 301 to 538 are required for oligomerization; that stretch reads RQHHAGPPST…VPAAEHRLRE (238 aa). A compositionally biased stretch (pro residues) spans 310–320; it reads TSRPPRPWDTP. The segment at 325 to 550 is RNA-interacting domain 2; sequence YAETKHFLYS…LAKFLHWLMS (226 aa). The short motif at 328–333 is the TFLY; involved in RNA binding element; the sequence is TKHFLY. Residues 376–521 are QFP motif; that stretch reads PRRLPRLPQR…MSVRDCAWLR (146 aa). The interval 397-417 is CP motif; the sequence is LGNHAQCPYGVLLKTHCPLRA. Position 457 is a phosphoserine; by DYRK2 (Ser-457). A Reverse transcriptase domain is found at 605 to 935; the sequence is EVRQHREARP…GLFPWCGLLL (331 aa). Tyr-707 carries the post-translational modification Phosphotyrosine; by SRC-type Tyr-kinases. Residues Asp-712, Asp-868, and Asp-869 each contribute to the Mg(2+) site. Residues 914-928 form a required for oligomerization region; sequence LGGTAFVQMPAHGLF. Residues 930 to 934 are primer grip sequence; it reads WCGLL. The interval 936-1132 is CTE; sequence DTRTLEVQSD…LPSDFKTILD (197 aa).

This sequence belongs to the reverse transcriptase family. Telomerase subfamily. As to quaternary structure, catalytic component of the telomerase holoenzyme complex composed of one molecule of TERT, one molecule of WRAP53/TCAB1, two molecules of H/ACA ribonucleoprotein complex subunits DKC1, NOP10, NHP2 and GAR1, and a telomerase RNA template component (TERC). The telomerase holoenzyme complex is associated with TEP1, SMG6/EST1A and POT1. The molecular chaperone HSP90/P23 complex is required for correct assembly and stabilization of the active telomerase. Interacts directly with HSP90A and PTGES3. Interacts with HSPA1A; the interaction occurs in the absence of TERC and dissociates once the complex has formed. Interacts with RAN; the interaction promotes nuclear export of TERT. Interacts with XPO1. Interacts with PTPN11; the interaction retains TERT in the nucleus. Interacts with NCL (via RRM1 and C-terminal RRM4/Arg/Gly-rich domains); the interaction is important for nucleolar localization of TERT. Interacts with SMARCA4 (via the bromodomain); the interaction regulates Wnt-mediated signaling. Interacts with MCRS1 (isoform MCRS2); the interaction inhibits in vitro telomerase activity. Interacts with PIF1; the interaction has no effect on the elongation activity of TERT. Interacts with PML; the interaction recruits TERT to PML bodies and inhibits telomerase activity. Interacts with GNL3L. Interacts with isoform 1 and isoform 2 of NVL. Interacts with DHX36. Interacts with ATF7. In terms of processing, phosphorylation at Tyr-707 under oxidative stress leads to translocation of TERT to the cytoplasm and reduces its antiapoptotic activity. Dephosphorylated by SHP2/PTPN11 leading to nuclear retention. Phosphorylation at Ser-227 by the AKT pathway promotes nuclear location. Phosphorylation at the G2/M phase at Ser-457 by DYRK2 promotes ubiquitination by the EDVP complex and degradation. Ubiquitinated by the EDVP complex, a E3 ligase complex following phosphorylation at Ser-457 by DYRK2. Ubiquitinated leads to proteasomal degradation. Post-translationally, (Microbial infection) In case of infection by HIV-1, the EDVP complex is hijacked by HIV-1 via interaction between HIV-1 Vpr and DCAF1/VPRBP, leading to ubiquitination and degradation. Expressed at a high level in thymocyte subpopulations, at an intermediate level in tonsil T-lymphocytes, and at a low to undetectable level in peripheral blood T-lymphocytes.

The protein localises to the nucleus. The protein resides in the nucleolus. Its subcellular location is the nucleoplasm. It is found in the chromosome. It localises to the telomere. The protein localises to the cytoplasm. The protein resides in the PML body. It carries out the reaction DNA(n) + a 2'-deoxyribonucleoside 5'-triphosphate = DNA(n+1) + diphosphate. Telomerase is a ribonucleoprotein enzyme essential for the replication of chromosome termini in most eukaryotes. Active in progenitor and cancer cells. Inactive, or very low activity, in normal somatic cells. Catalytic component of the teleromerase holoenzyme complex whose main activity is the elongation of telomeres by acting as a reverse transcriptase that adds simple sequence repeats to chromosome ends by copying a template sequence within the RNA component of the enzyme. Catalyzes the RNA-dependent extension of 3'-chromosomal termini with the 6-nucleotide telomeric repeat unit, 5'-TTAGGG-3'. The catalytic cycle involves primer binding, primer extension and release of product once the template boundary has been reached or nascent product translocation followed by further extension. More active on substrates containing 2 or 3 telomeric repeats. Telomerase activity is regulated by a number of factors including telomerase complex-associated proteins, chaperones and polypeptide modifiers. Modulates Wnt signaling. Plays important roles in aging and antiapoptosis. In Homo sapiens (Human), this protein is Telomerase reverse transcriptase (TERT).